Consider the following 396-residue polypeptide: Tyrosine--tRNA ligase (396 aa).

The 'HIGH' region signature appears at proline 43–histidine 52. Positions lysine 227–serine 231 match the 'KMSKS' region motif. Residue lysine 230 participates in ATP binding. Residues isoleucine 338 to valine 396 enclose the S4 RNA-binding domain.

The protein belongs to the class-I aminoacyl-tRNA synthetase family. TyrS type 2 subfamily. As to quaternary structure, homodimer.

It localises to the cytoplasm. It carries out the reaction tRNA(Tyr) + L-tyrosine + ATP = L-tyrosyl-tRNA(Tyr) + AMP + diphosphate + H(+). Its function is as follows. Catalyzes the attachment of tyrosine to tRNA(Tyr) in a two-step reaction: tyrosine is first activated by ATP to form Tyr-AMP and then transferred to the acceptor end of tRNA(Tyr). The sequence is that of Tyrosine--tRNA ligase from Dehalococcoides mccartyi (strain ATCC BAA-2266 / KCTC 15142 / 195) (Dehalococcoides ethenogenes (strain 195)).